Consider the following 202-residue polypeptide: Dephospho-CoA kinase (202 aa).

One can recognise a DPCK domain in the interval 3-200 (TIGLTGGIGS…QRYLTLAANR (198 aa)). ATP is bound at residue 11 to 16 (GSGKSA).

Belongs to the CoaE family.

Its subcellular location is the cytoplasm. It carries out the reaction 3'-dephospho-CoA + ATP = ADP + CoA + H(+). Its pathway is cofactor biosynthesis; coenzyme A biosynthesis; CoA from (R)-pantothenate: step 5/5. Catalyzes the phosphorylation of the 3'-hydroxyl group of dephosphocoenzyme A to form coenzyme A. The polypeptide is Dephospho-CoA kinase (Thiobacillus denitrificans (strain ATCC 25259 / T1)).